A 398-amino-acid polypeptide reads, in one-letter code: Nucleotide-sugar uncharacterized transporter 2 (398 aa).

10 helical membrane-spanning segments follow: residues 54-74 (FCGPVVAMSFNFVVAVGIILA), 84-104 (FNFPIFLTLIHYTVAWILLAF), 119-139 (TTPFSSLFSLGAVMAFASGLA), 150-170 (FYQMAKIAVTPTIVLAEFVLF), 179-199 (VMALAVVSLGVAIATVTDLEF), 201-221 (LFGALVAVAWIIPSAINKILW), 242-262 (FTVFFLLALMPWLDPPGVLLF), 271-291 (AILISALLGFLLQWSGALALG), 299-319 (VVLGQFKTCVILLGGYVIFGS), and 322-342 (GFISICGAIAALGGMSVYTWL).

This sequence belongs to the TPT transporter family. TPT (TC 2.A.7.9) subfamily.

The protein localises to the membrane. This chain is Nucleotide-sugar uncharacterized transporter 2, found in Arabidopsis thaliana (Mouse-ear cress).